A 486-amino-acid polypeptide reads, in one-letter code: uncharacterized protein (486 aa).

Residues 7 to 28 (HVISIFETVGAYFINIFYNFLY) form a helical membrane-spanning segment. Residues Asn73, Asn83, and Asn195 are each glycosylated (N-linked (GlcNAc...) asparagine; by host). A coiled-coil region spans residues 183 to 233 (ELEETYARLSSYNRSLLYQIEELTSEKKSFLEELSTLRKKYEKRQSEYRRL). Positions 299-329 (SQEVTSKSPNNYPVPQSRTIVNKPSDNYPVP) are disordered. The segment covering 300–323 (QEVTSKSPNNYPVPQSRTIVNKPS) has biased composition (polar residues). N-linked (GlcNAc...) asparagine; by host glycosylation is present at Asn461.

Belongs to the asfivirus B475L family.

It is found in the host membrane. This is an uncharacterized protein from Ornithodoros (relapsing fever ticks).